Reading from the N-terminus, the 697-residue chain is Long-chain-fatty-acid--CoA ligase 6 (697 aa).

Residues leucine 25 to threonine 45 traverse the membrane as a helical; Signal-anchor for type III membrane protein segment. Topologically, residues histidine 46–methionine 697 are cytoplasmic.

Belongs to the ATP-dependent AMP-binding enzyme family. Requires Mg(2+) as cofactor. In terms of tissue distribution, expressed predominantly in brain and, to a much lesser extent, in heart and adrenal.

The protein localises to the mitochondrion outer membrane. It localises to the peroxisome membrane. The protein resides in the microsome membrane. Its subcellular location is the endoplasmic reticulum membrane. The catalysed reaction is a long-chain fatty acid + ATP + CoA = a long-chain fatty acyl-CoA + AMP + diphosphate. It catalyses the reaction (5Z,8Z,11Z,14Z)-eicosatetraenoate + ATP + CoA = (5Z,8Z,11Z,14Z)-eicosatetraenoyl-CoA + AMP + diphosphate. The enzyme catalyses 15-hydroxy-(5Z,8Z,11Z,13E)-eicosatetraenoate + ATP + CoA = 15-hydroxy-(5Z,8Z,11Z,13E)-eicosatetraenoyl-CoA + AMP + diphosphate. It carries out the reaction 12-hydroxy-(5Z,8Z,10E,14Z)-eicosatetraenoate + ATP + CoA = 12-hydroxy-(5Z,8Z,10E,14Z)-eicosatetraenoyl-CoA + AMP + diphosphate. The catalysed reaction is 5-hydroxy-(6E,8Z,11Z,14Z)-eicosatetraenoate + ATP + CoA = 5-hydroxy-(6E,8Z,11Z,14Z)-eicosatetraenoyl-CoA + AMP + diphosphate. It catalyses the reaction hexadecanoate + ATP + CoA = hexadecanoyl-CoA + AMP + diphosphate. The enzyme catalyses (E)-hexadec-2-enoate + ATP + CoA = (2E)-hexadecenoyl-CoA + AMP + diphosphate. Functionally, catalyzes the conversion of long-chain fatty acids to their active form acyl-CoA for both synthesis of cellular lipids, and degradation via beta-oxidation. Plays an important role in fatty acid metabolism in brain and the acyl-CoAs produced may be utilized exclusively for the synthesis of the brain lipid. The protein is Long-chain-fatty-acid--CoA ligase 6 of Rattus norvegicus (Rat).